The following is an 82-amino-acid chain: MNHKFIALLLVVLCCALSVHQVSAEIPSHCTLPLATGTCRGYFPRFGYNVEMGKCVEFIYGGCDGNANNFRNLEECQQSCSV.

A signal peptide spans 1 to 24; sequence MNHKFIALLLVVLCCALSVHQVSA. Residues 30-80 enclose the BPTI/Kunitz inhibitor domain; sequence CTLPLATGTCRGYFPRFGYNVEMGKCVEFIYGGCDGNANNFRNLEECQQSC. 3 disulfides stabilise this stretch: Cys30-Cys80, Cys39-Cys63, and Cys55-Cys76.

It belongs to the venom Kunitz-type family. In terms of tissue distribution, expressed by the venom gland.

It localises to the secreted. Serine protease inhibitor that inhibits plasmin (Ki=2.01 nM) and trypsin. Acts as an antifibrinolytic agent. This chain is Kunitz-type serine protease inhibitor Bt-KTI, found in Bombus terrestris (Buff-tailed bumblebee).